The primary structure comprises 510 residues: UDP-N-acetylmuramate--L-alanine ligase (510 aa).

The segment at 1–25 is disordered; the sequence is MVETVGGKDAVAPAPARSPSPPAKN. Residue 140-146 participates in ATP binding; it reads GTHGKTT.

Belongs to the MurCDEF family.

It is found in the cytoplasm. The enzyme catalyses UDP-N-acetyl-alpha-D-muramate + L-alanine + ATP = UDP-N-acetyl-alpha-D-muramoyl-L-alanine + ADP + phosphate + H(+). It participates in cell wall biogenesis; peptidoglycan biosynthesis. Cell wall formation. This Synechococcus sp. (strain JA-3-3Ab) (Cyanobacteria bacterium Yellowstone A-Prime) protein is UDP-N-acetylmuramate--L-alanine ligase.